The chain runs to 294 residues: Glyceraldehyde-3-phosphate dehydrogenase (294 aa).

Residues Asp-19, Lys-63, and Thr-105 each coordinate NAD(+). D-glyceraldehyde 3-phosphate is bound by residues 134–136 (SCT) and Thr-165. Cys-135 serves as the catalytic Nucleophile. The segment at 169–188 (KTVDGPSHKDWRGGRGASQN) is disordered. Residues 194 to 195 (TG) and Arg-217 each bind D-glyceraldehyde 3-phosphate.

It belongs to the glyceraldehyde-3-phosphate dehydrogenase family. As to quaternary structure, homotetramer.

The protein localises to the cytoplasm. It catalyses the reaction D-glyceraldehyde 3-phosphate + phosphate + NAD(+) = (2R)-3-phospho-glyceroyl phosphate + NADH + H(+). It functions in the pathway carbohydrate degradation; glycolysis; pyruvate from D-glyceraldehyde 3-phosphate: step 1/5. Functionally, catalyzes the oxidative phosphorylation of glyceraldehyde 3-phosphate (G3P) to 1,3-bisphosphoglycerate (BPG) using the cofactor NAD. The first reaction step involves the formation of a hemiacetal intermediate between G3P and a cysteine residue, and this hemiacetal intermediate is then oxidized to a thioester, with concomitant reduction of NAD to NADH. The reduced NADH is then exchanged with the second NAD, and the thioester is attacked by a nucleophilic inorganic phosphate to produce BPG. This Serratia marcescens protein is Glyceraldehyde-3-phosphate dehydrogenase (gap).